Here is a 414-residue protein sequence, read N- to C-terminus: Glutamyl-tRNA reductase (414 aa).

Substrate is bound by residues 49 to 52 (TCNR), serine 108, 113 to 115 (EPQ), and glutamine 119. The active-site Nucleophile is the cysteine 50. 188–193 (GAGQTG) provides a ligand contact to NADP(+).

This sequence belongs to the glutamyl-tRNA reductase family. In terms of assembly, homodimer.

It carries out the reaction (S)-4-amino-5-oxopentanoate + tRNA(Glu) + NADP(+) = L-glutamyl-tRNA(Glu) + NADPH + H(+). It participates in porphyrin-containing compound metabolism; protoporphyrin-IX biosynthesis; 5-aminolevulinate from L-glutamyl-tRNA(Glu): step 1/2. Functionally, catalyzes the NADPH-dependent reduction of glutamyl-tRNA(Glu) to glutamate 1-semialdehyde (GSA). This is Glutamyl-tRNA reductase from Francisella tularensis subsp. novicida (strain U112).